We begin with the raw amino-acid sequence, 141 residues long: Hemoglobin subunit alpha-D (141 aa).

Residues 1–141 enclose the Globin domain; it reads VLTAEDKKLI…VAAVLAEKYR (141 aa). The heme b site is built by H58 and H87.

The protein belongs to the globin family. In terms of assembly, heterotetramer of two alpha-D chains and two beta chains. As to expression, red blood cells.

Its function is as follows. Involved in oxygen transport from the lung to the various peripheral tissues. This chain is Hemoglobin subunit alpha-D (HBAD), found in Sturnus vulgaris (Starling).